The following is a 490-amino-acid chain: Zinc finger protein STP4 (490 aa).

Composition is skewed to low complexity over residues 1-16 and 52-73; these read MLVSSSFASSIDSVMS and PSLPLLSSTTSSSRSTLSSTLN. Residues 1-85 are disordered; it reads MLVSSSFASS…PPPPLTTSYS (85 aa). Phosphoserine occurs at positions 153 and 155. Low complexity predominate over residues 231 to 247; it reads QQQQQLNSSSSASALPS. Residues 231-273 form a disordered region; it reads QQQQQLNSSSSASALPSIHSPLTNEHTSRYSSSLKDSAKITKQ. Polar residues predominate over residues 250-265; the sequence is SPLTNEHTSRYSSSLK. Residues 304–326 form a C2H2-type zinc finger; it reads HKCPICQRGFARNNDLIRHKKRH. Residues 338–375 form a disordered region; it reads ESDNNSGADDQDDTARTSANNDSDDSNDKLAASSSSEE.

The protein localises to the cytoplasm. It localises to the mitochondrion. Its subcellular location is the nucleus. The chain is Zinc finger protein STP4 (STP4) from Saccharomyces cerevisiae (strain ATCC 204508 / S288c) (Baker's yeast).